Consider the following 265-residue polypeptide: uncharacterized protein (265 aa).

Residues 3–23 (KKTWVYIIIAIIIILLLVWYF) traverse the membrane as a helical; Signal-anchor for type II membrane protein segment. N-linked (GlcNAc...) asparagine; by host glycans are attached at residues asparagine 37 and asparagine 125. Residues 37–94 (NQTYNMLQQQISSLNQQILFLKQQISNLHVPAPTSTVNSLRQTVSDINQQVSTINNQI) adopt a coiled-coil conformation. A coiled-coil region spans residues 158-257 (NVADNELNVL…KNSLGSAVRN (100 aa)).

It is found in the host membrane. Its subcellular location is the virion. This is an uncharacterized protein from Acanthamoeba polyphaga (Amoeba).